Reading from the N-terminus, the 443-residue chain is Frizzled/smoothened-like sans CRD protein E (443 aa).

An N-terminal signal peptide occupies residues 1–23 (MISHIKKFINLYTIVFLLYILYS). Over 24-83 (NENFFVKGQKLPPGFCPSPLIYRNTTDRQSDIDIGFQFLGETNCVQPCPSLILTENEWNK) the chain is Extracellular. Asn47 carries an N-linked (GlcNAc...) asparagine glycan. A helical transmembrane segment spans residues 84-104 (VFNMSLVAGTISMFALIFLII). Residues 105–120 (TYSPLVNNIKDYTRHT) lie on the Cytoplasmic side of the membrane. A helical transmembrane segment spans residues 121–141 (VGILFLFSGILIAMTTDGRQL). Over 142–166 (WDIDLGFKKYCPEPGRFARQSDSKC) the chain is Extracellular. A helical membrane pass occupies residues 167–187 (LVTAIFFQFGCVTALLWWAAI). Topologically, residues 188–203 (SVDLWITIKKIKISKK) are cytoplasmic. The chain crosses the membrane as a helical span at residues 204 to 224 (LFIIYTIAVNIVTIVLTFGPV). Topologically, residues 225 to 248 (GSKQYGYIDAAIGCWLMDLKYQVG) are extracellular. Residues 249-269 (YFWAPVGFCLCVGCVSIVLIL) form a helical membrane-spanning segment. At 270–289 (KEIYNVSDAVKKKLLAKHLK) the chain is on the cytoplasmic side. The chain crosses the membrane as a helical span at residues 290–310 (PLMLIILMLTEFIYMFIFYSY). Over 311–350 (TTSKKNHYHDIIEEYVVCLFVHAANPSVCKIGSTISPSAH) the chain is Extracellular. Residues 351-371 (FFFHLCIRLMGLEVLIFYGFT) form a helical membrane-spanning segment. The Cytoplasmic portion of the chain corresponds to 372–443 (RQTRKIWMRS…SGIDDSKHDP (72 aa)). Composition is skewed to low complexity over residues 397–410 (SSSNDSKSSNNKTS) and 419–432 (ESSEQSNEPEQSIE). A disordered region spans residues 397–443 (SSSNDSKSSNNKTSGRVTGGFGESSEQSNEPEQSIELSGIDDSKHDP).

It belongs to the G-protein coupled receptor Fz/Smo family.

Its subcellular location is the membrane. This chain is Frizzled/smoothened-like sans CRD protein E (fscE), found in Dictyostelium discoideum (Social amoeba).